A 108-amino-acid chain; its full sequence is Large ribosomal subunit protein uL24 (108 aa).

This sequence belongs to the universal ribosomal protein uL24 family. In terms of assembly, part of the 50S ribosomal subunit.

One of two assembly initiator proteins, it binds directly to the 5'-end of the 23S rRNA, where it nucleates assembly of the 50S subunit. Functionally, one of the proteins that surrounds the polypeptide exit tunnel on the outside of the subunit. The sequence is that of Large ribosomal subunit protein uL24 from Salinispora tropica (strain ATCC BAA-916 / DSM 44818 / JCM 13857 / NBRC 105044 / CNB-440).